The sequence spans 697 residues: Elongation factor G (697 aa).

In terms of domain architecture, tr-type G spans 10–285 (ERTRNIGIMA…AVVDYLPSPL (276 aa)). Residues 19-26 (AHIDAGKT), 83-87 (DTPGH), and 137-140 (NKMD) contribute to the GTP site.

The protein belongs to the TRAFAC class translation factor GTPase superfamily. Classic translation factor GTPase family. EF-G/EF-2 subfamily.

It localises to the cytoplasm. In terms of biological role, catalyzes the GTP-dependent ribosomal translocation step during translation elongation. During this step, the ribosome changes from the pre-translocational (PRE) to the post-translocational (POST) state as the newly formed A-site-bound peptidyl-tRNA and P-site-bound deacylated tRNA move to the P and E sites, respectively. Catalyzes the coordinated movement of the two tRNA molecules, the mRNA and conformational changes in the ribosome. The sequence is that of Elongation factor G from Pediococcus pentosaceus (strain ATCC 25745 / CCUG 21536 / LMG 10740 / 183-1w).